The following is a 1862-amino-acid chain: Chitin synthase V (1862 aa).

The segment at 1 to 26 (MAMSLPQLGGAGGPHTQPSLPSLPAH) is disordered. Residues 1–778 (MAMSLPQLGG…CWMEIAQLGE (778 aa)) enclose the Myosin motor domain. The N-linked (GlcNAc...) asparagine glycan is linked to asparagine 63. 104 to 111 (GESGAGKS) contacts ATP. 5 N-linked (GlcNAc...) asparagine glycosylation sites follow: asparagine 123, asparagine 429, asparagine 483, asparagine 522, and asparagine 560. The tract at residues 592-643 (TVSSKPMRAPSVMSRKTHRTGRPSTAYKRQQQEAMEELDQQSQAGESKKNAK) is disordered. Positions 658-682 (LDNVQKAVTDPGTNSYFVFCLKPND) are actin-binding. 2 helical membrane passes run 884 to 904 (WVAL…RLIG) and 923 to 943 (MLIW…PMLI). In terms of domain architecture, Cytochrome b5 heme-binding spans 947–1009 (QYVYSSNELS…YAGKDISALF (63 aa)). N-linked (GlcNAc...) asparagine glycosylation is found at asparagine 1036, asparagine 1063, and asparagine 1192. Residues 1202–1222 (FILAISVMLASILVFKFLAAL) traverse the membrane as a helical segment. 2 N-linked (GlcNAc...) asparagine glycosylation sites follow: asparagine 1459 and asparagine 1565. 3 helical membrane-spanning segments follow: residues 1590–1610 (FVVF…MYIV), 1623–1643 (VPIT…VIFI), and 1650–1670 (MVGW…GLPL). N-linked (GlcNAc...) asparagine glycosylation occurs at asparagine 1771. In terms of domain architecture, DEK-C spans 1804–1859 (MPSDDALLAEIRDILKTADLMTVTKKGIKQELERRFNVPLDAKRAYINSATEALLS).

The protein in the N-terminal section; belongs to the TRAFAC class myosin-kinesin ATPase superfamily. Myosin family. This sequence in the C-terminal section; belongs to the chitin synthase family. Class V subfamily.

The protein resides in the cell membrane. The catalysed reaction is [(1-&gt;4)-N-acetyl-beta-D-glucosaminyl](n) + UDP-N-acetyl-alpha-D-glucosamine = [(1-&gt;4)-N-acetyl-beta-D-glucosaminyl](n+1) + UDP + H(+). Its function is as follows. Polymerizes chitin, a structural polymer of the cell wall and septum, by transferring the sugar moiety of UDP-GlcNAc to the non-reducing end of the growing chitin polymer. ChsV and chsVb do perform additive, but not redundant, functions in septum formation. Involved in cell wall integrity and resistance to antimicrobial plant defense compounds such as the tomato phytoanticipin alpha-tomatine or H(2)O(2), and plays a crucial role in vascular colonization and pathogenicity. Also plays an important role in nuclear sorting or distribution. In Fusarium oxysporum f. sp. lycopersici (strain 4287 / CBS 123668 / FGSC 9935 / NRRL 34936) (Fusarium vascular wilt of tomato), this protein is Chitin synthase V.